Here is a 408-residue protein sequence, read N- to C-terminus: Putative transporter AmpG 2 (408 aa).

12 consecutive transmembrane segments (helical) span residues 11-31 (IFNI…YLLT), 49-69 (IGLF…GPLL), 84-104 (YCLV…TSFN), 110-130 (TPFV…DMLI), 154-174 (FRIG…IISW), 177-197 (VYRT…FYPL), 224-244 (WIVI…LSIM), 261-281 (IGYK…GGFL), 294-311 (VLIY…LYFL), 315-337 (IISL…SPFF), 353-373 (IALI…ISGY), and 382-402 (YFFI…LYLP).

It belongs to the major facilitator superfamily.

The protein localises to the cell inner membrane. This Rickettsia typhi (strain ATCC VR-144 / Wilmington) protein is Putative transporter AmpG 2 (ampG2).